We begin with the raw amino-acid sequence, 439 residues long: ATP-dependent RNA helicase RhlB (439 aa).

A Q motif motif is present at residues 9–37; the sequence is QKFADLPLHPEVKQALAENGFEFCTPIQA. A Helicase ATP-binding domain is found at 40 to 219; the sequence is LPVLLQSKDI…YDHMNEPVKV (180 aa). An ATP-binding site is contributed by 53–60; that stretch reads AQTGTGKT. A DEAD box motif is present at residues 165–168; that stretch reads DEAD. Residues 243–390 form the Helicase C-terminal domain; sequence KMRLLLTLIE…VSNYDRDALL (148 aa). The tract at residues 395–439 is disordered; that stretch reads PPVKIHRRHPAGARNLRERSGAGRPQGAHRSGGRPPRHDRTRRQP. Residues 425 to 439 show a composition bias toward basic residues; the sequence is SGGRPPRHDRTRRQP.

This sequence belongs to the DEAD box helicase family. RhlB subfamily. Component of the RNA degradosome, which is a multiprotein complex involved in RNA processing and mRNA degradation.

It is found in the cytoplasm. It carries out the reaction ATP + H2O = ADP + phosphate + H(+). DEAD-box RNA helicase involved in RNA degradation. Has RNA-dependent ATPase activity and unwinds double-stranded RNA. The chain is ATP-dependent RNA helicase RhlB from Shewanella sp. (strain ANA-3).